A 270-amino-acid chain; its full sequence is Protein US2 homolog (270 aa).

The protein belongs to the herpesviridae US2 family.

This Gallid herpesvirus 2 (strain Chicken/Md5/ATCC VR-987) (GaHV-2) protein is Protein US2 homolog (MDV091).